We begin with the raw amino-acid sequence, 310 residues long: Ornithine carbamoyltransferase (310 aa).

Residues 58–61 (STRT), Q85, R109, and 136–139 (HPCQ) contribute to the carbamoyl phosphate site. Residues N167, D227, and 231 to 232 (SM) contribute to the L-ornithine site. Residues 266-267 (CL) and R294 contribute to the carbamoyl phosphate site.

Belongs to the aspartate/ornithine carbamoyltransferase superfamily. OTCase family.

The protein localises to the cytoplasm. It catalyses the reaction carbamoyl phosphate + L-ornithine = L-citrulline + phosphate + H(+). The protein operates within amino-acid biosynthesis; L-arginine biosynthesis; L-arginine from L-ornithine and carbamoyl phosphate: step 1/3. Its function is as follows. Reversibly catalyzes the transfer of the carbamoyl group from carbamoyl phosphate (CP) to the N(epsilon) atom of ornithine (ORN) to produce L-citrulline. This Rhodopseudomonas palustris (strain ATCC BAA-98 / CGA009) protein is Ornithine carbamoyltransferase.